Consider the following 546-residue polypeptide: Chaperonin GroEL (546 aa).

ATP contacts are provided by residues 29 to 32, lysine 50, 86 to 90, glycine 414, and aspartate 492; these read TMGP and DGTTT.

It belongs to the chaperonin (HSP60) family. Forms a cylinder of 14 subunits composed of two heptameric rings stacked back-to-back. Interacts with the co-chaperonin GroES.

It is found in the cytoplasm. It catalyses the reaction ATP + H2O + a folded polypeptide = ADP + phosphate + an unfolded polypeptide.. Together with its co-chaperonin GroES, plays an essential role in assisting protein folding. The GroEL-GroES system forms a nano-cage that allows encapsulation of the non-native substrate proteins and provides a physical environment optimized to promote and accelerate protein folding. The protein is Chaperonin GroEL of Helicobacter pylori (strain HPAG1).